We begin with the raw amino-acid sequence, 436 residues long: Glutamyl-tRNA reductase (436 aa).

Residues 50–53 (TCNR), Ser110, 115–117 (ETQ), and Gln121 contribute to the substrate site. Cys51 functions as the Nucleophile in the catalytic mechanism. An NADP(+)-binding site is contributed by 190–195 (GLGEMS).

The protein belongs to the glutamyl-tRNA reductase family. Homodimer.

It catalyses the reaction (S)-4-amino-5-oxopentanoate + tRNA(Glu) + NADP(+) = L-glutamyl-tRNA(Glu) + NADPH + H(+). It functions in the pathway porphyrin-containing compound metabolism; protoporphyrin-IX biosynthesis; 5-aminolevulinate from L-glutamyl-tRNA(Glu): step 1/2. Its function is as follows. Catalyzes the NADPH-dependent reduction of glutamyl-tRNA(Glu) to glutamate 1-semialdehyde (GSA). The polypeptide is Glutamyl-tRNA reductase (Wolinella succinogenes (strain ATCC 29543 / DSM 1740 / CCUG 13145 / JCM 31913 / LMG 7466 / NCTC 11488 / FDC 602W) (Vibrio succinogenes)).